Consider the following 323-residue polypeptide: Beta-ketoacyl-[acyl-carrier-protein] synthase III 1 (323 aa).

Active-site residues include Cys-114 and His-254. The tract at residues 255–259 is ACP-binding; that stretch reads QANLR. Asn-284 is an active-site residue.

It belongs to the thiolase-like superfamily. FabH family. In terms of assembly, homodimer.

It localises to the cytoplasm. It carries out the reaction malonyl-[ACP] + acetyl-CoA + H(+) = 3-oxobutanoyl-[ACP] + CO2 + CoA. It functions in the pathway lipid metabolism; fatty acid biosynthesis. Functionally, catalyzes the condensation reaction of fatty acid synthesis by the addition to an acyl acceptor of two carbons from malonyl-ACP. Catalyzes the first condensation reaction which initiates fatty acid synthesis and may therefore play a role in governing the total rate of fatty acid production. Possesses both acetoacetyl-ACP synthase and acetyl transacylase activities. Its substrate specificity determines the biosynthesis of branched-chain and/or straight-chain of fatty acids. This Lactiplantibacillus plantarum (strain ATCC BAA-793 / NCIMB 8826 / WCFS1) (Lactobacillus plantarum) protein is Beta-ketoacyl-[acyl-carrier-protein] synthase III 1.